Consider the following 161-residue polypeptide: RNA pyrophosphohydrolase (161 aa).

The Nudix hydrolase domain occupies 12–154; the sequence is PYRPGVGMMI…KRKLYQAVVK (143 aa). The Nudix box signature appears at 46 to 67; it reads GGIVPGETPSIAAMREMLEEIG.

Belongs to the Nudix hydrolase family. RppH subfamily. A divalent metal cation is required as a cofactor.

Functionally, accelerates the degradation of transcripts by removing pyrophosphate from the 5'-end of triphosphorylated RNA, leading to a more labile monophosphorylated state that can stimulate subsequent ribonuclease cleavage. The chain is RNA pyrophosphohydrolase from Rickettsia bellii (strain OSU 85-389).